A 343-amino-acid polypeptide reads, in one-letter code: Isopentenyl-diphosphate delta-isomerase (343 aa).

Residue 6 to 7 (RK) participates in substrate binding. Residues Ser63, 64–66 (SMT), Ser94, and Asn122 contribute to the FMN site. 94 to 96 (SMR) contacts substrate. Gln157 provides a ligand contact to substrate. Glu158 contacts Mg(2+). FMN-binding positions include Lys189, Thr219, 269–271 (GLK), and 290–291 (AG).

This sequence belongs to the IPP isomerase type 2 family. As to quaternary structure, homooctamer. Dimer of tetramers. FMN serves as cofactor. It depends on NADPH as a cofactor. Mg(2+) is required as a cofactor.

It localises to the cytoplasm. The catalysed reaction is isopentenyl diphosphate = dimethylallyl diphosphate. In terms of biological role, involved in the biosynthesis of isoprenoids. Catalyzes the 1,3-allylic rearrangement of the homoallylic substrate isopentenyl (IPP) to its allylic isomer, dimethylallyl diphosphate (DMAPP). The sequence is that of Isopentenyl-diphosphate delta-isomerase from Rickettsia bellii (strain OSU 85-389).